The primary structure comprises 756 residues: Ent-kaurene synthase, chloroplastic (756 aa).

Aspartate 507 and aspartate 511 together coordinate Mg(2+). A DDXXD motif motif is present at residues 507-511 (DDFFD). A helical membrane pass occupies residues 606–622 (YVSFALGPIVLPCLYLV). The Mg(2+) site is built by asparagine 651, threonine 655, and glutamate 659.

This sequence belongs to the terpene synthase family. It depends on Mg(2+) as a cofactor. Present in both leaves and flowers.

Its subcellular location is the plastid. The protein resides in the chloroplast membrane. It carries out the reaction ent-copalyl diphosphate = ent-kaur-16-ene + diphosphate. Its pathway is plant hormone biosynthesis; gibberellin biosynthesis. In terms of biological role, involved in the biosynthesis of labdane-type diterpenoid including marrubiin and other labdane-related furanoid diterpenoids with potential applications as anti-diabetics, analgesics or vasorelaxants. Terpene synthase that produces ent-kaurene from ent-copalyl diphosphate (ent-CPP). This Marrubium vulgare (White horehound) protein is Ent-kaurene synthase, chloroplastic.